The sequence spans 162 residues: 6,7-dimethyl-8-ribityllumazine synthase (162 aa).

Residues Phe22, 56-58 (TFE), and 80-82 (AVI) each bind 5-amino-6-(D-ribitylamino)uracil. 85-86 (GT) contacts (2S)-2-hydroxy-3-oxobutyl phosphate. The active-site Proton donor is the His88. Met113 lines the 5-amino-6-(D-ribitylamino)uracil pocket. Arg127 contributes to the (2S)-2-hydroxy-3-oxobutyl phosphate binding site.

The protein belongs to the DMRL synthase family.

It carries out the reaction (2S)-2-hydroxy-3-oxobutyl phosphate + 5-amino-6-(D-ribitylamino)uracil = 6,7-dimethyl-8-(1-D-ribityl)lumazine + phosphate + 2 H2O + H(+). It functions in the pathway cofactor biosynthesis; riboflavin biosynthesis; riboflavin from 2-hydroxy-3-oxobutyl phosphate and 5-amino-6-(D-ribitylamino)uracil: step 1/2. In terms of biological role, catalyzes the formation of 6,7-dimethyl-8-ribityllumazine by condensation of 5-amino-6-(D-ribitylamino)uracil with 3,4-dihydroxy-2-butanone 4-phosphate. This is the penultimate step in the biosynthesis of riboflavin. This is 6,7-dimethyl-8-ribityllumazine synthase from Anaeromyxobacter dehalogenans (strain 2CP-C).